The primary structure comprises 312 residues: Ornithine carbamoyltransferase (312 aa).

Carbamoyl phosphate-binding positions include 57-60 (STRT), Q84, R108, and 135-138 (HPCQ). L-ornithine is bound by residues N166, D226, and 230–231 (SM). Carbamoyl phosphate-binding positions include 265–266 (CL) and R293.

The protein belongs to the aspartate/ornithine carbamoyltransferase superfamily. OTCase family.

It localises to the cytoplasm. It carries out the reaction carbamoyl phosphate + L-ornithine = L-citrulline + phosphate + H(+). It participates in amino-acid degradation; L-arginine degradation via ADI pathway; carbamoyl phosphate from L-arginine: step 2/2. Its function is as follows. Reversibly catalyzes the transfer of the carbamoyl group from carbamoyl phosphate (CP) to the N(epsilon) atom of ornithine (ORN) to produce L-citrulline. The protein is Ornithine carbamoyltransferase of Brucella abortus (strain 2308).